Here is a 201-residue protein sequence, read N- to C-terminus: MDKFTKLTGVAAPLPIVNIDTDMIIPKDYLKTIKRTGLGKGLFAEMRFNEDGSENPDFVLNKPGYRKAQILVAGDNFGCGSSREHAPWALLDYGIRCVISTSFADIFYNNCFKNGILPIKVAQEDLDKLMDDASRGANATLTIDLETKQIHGPDGGTISFDLDDFKRHCLLNGLDDIGLTMEKAKSIDTFEAKNAEERPWA.

This sequence belongs to the LeuD family. LeuD type 1 subfamily. Heterodimer of LeuC and LeuD.

The catalysed reaction is (2R,3S)-3-isopropylmalate = (2S)-2-isopropylmalate. The protein operates within amino-acid biosynthesis; L-leucine biosynthesis; L-leucine from 3-methyl-2-oxobutanoate: step 2/4. Functionally, catalyzes the isomerization between 2-isopropylmalate and 3-isopropylmalate, via the formation of 2-isopropylmaleate. This is 3-isopropylmalate dehydratase small subunit from Brucella abortus (strain S19).